The following is a 328-amino-acid chain: MKVAIVGASGYAGGELVRLLYHHSSAEVTCVTSRSLAGIPLSEVHPQLTGFSDLRFENPAPDAIDADVAFLAVPHTAAMTIAGKLLSRGIKVVDLSADYRLPKDTFEKVYGVTHTDYFPAPYGIPELHRKECINAKFVANPGCFPTGATLAAAPIASRAHTIIFDSKTGVSGAGDNPSATTHYPNVGDNVSPYKWTSHRHLAEMKQELSKLGSKAACYFTPHLVPVNRGILTTAHILLNEPLETKEVEKLYREYYKDEFFVRYQKPMLSAVRGSNFCDIMVESEGKRVVVVSAIDNLVKGASGQAIQNMNLMCGFKETDGLDAPGLLP.

The active site involves cysteine 143.

The protein belongs to the NAGSA dehydrogenase family. Type 1 subfamily.

It is found in the cytoplasm. The enzyme catalyses N-acetyl-L-glutamate 5-semialdehyde + phosphate + NADP(+) = N-acetyl-L-glutamyl 5-phosphate + NADPH + H(+). It functions in the pathway amino-acid biosynthesis; L-arginine biosynthesis; N(2)-acetyl-L-ornithine from L-glutamate: step 3/4. Its function is as follows. Catalyzes the NADPH-dependent reduction of N-acetyl-5-glutamyl phosphate to yield N-acetyl-L-glutamate 5-semialdehyde. The sequence is that of N-acetyl-gamma-glutamyl-phosphate reductase from Methanoregula boonei (strain DSM 21154 / JCM 14090 / 6A8).